We begin with the raw amino-acid sequence, 559 residues long: Putative ankyrin repeat protein RBE_0902 (559 aa).

10 ANK repeats span residues 11–40 (DGWT…EQAI), 46–75 (DGNT…DQAI), 81–110 (DGNT…TKQN), 158–189 (DDWT…VINH), 228–257 (NNDT…DQAI), 263–292 (DGNT…DQAI), 298–327 (YGNT…EQAI), 333–364 (QCDT…AINC), 372–402 (FGFT…EVII), and 524–554 (IDNN…WGLE).

The polypeptide is Putative ankyrin repeat protein RBE_0902 (Rickettsia bellii (strain RML369-C)).